Reading from the N-terminus, the 547-residue chain is Probable hydroxyacid-oxoacid transhydrogenase, mitochondrial (547 aa).

Belongs to the iron-containing alcohol dehydrogenase family. Hydroxyacid-oxoacid transhydrogenase subfamily.

The protein localises to the mitochondrion. The catalysed reaction is (S)-3-hydroxybutanoate + 2-oxoglutarate = (R)-2-hydroxyglutarate + acetoacetate. The enzyme catalyses 4-hydroxybutanoate + 2-oxoglutarate = (R)-2-hydroxyglutarate + succinate semialdehyde. In terms of biological role, catalyzes the cofactor-independent reversible oxidation of gamma-hydroxybutyrate (GHB) to succinic semialdehyde (SSA) coupled to reduction of 2-ketoglutarate (2-KG) to D-2-hydroxyglutarate (D-2-HG). L-3-hydroxybutyrate (L-3-OHB) is also a substrate for HOT when using 2-KG as hydrogen acceptor, resulting in the formation of D-2-HG. This chain is Probable hydroxyacid-oxoacid transhydrogenase, mitochondrial (adhfe1), found in Dictyostelium discoideum (Social amoeba).